Here is a 188-residue protein sequence, read N- to C-terminus: Ras-related protein Rap-1 (188 aa).

GTP is bound at residue Gly10–Ser17. Residues Tyr32–Tyr40 carry the Effector region motif. Residues Asp57–Thr61 and Asn116–Asp119 each bind GTP.

The protein belongs to the small GTPase superfamily. Ras family.

It catalyses the reaction GTP + H2O = GDP + phosphate + H(+). Required in the hypodermis for proper formation of the cuticle. The polypeptide is Ras-related protein Rap-1 (rap-1) (Caenorhabditis elegans).